Here is a 76-residue protein sequence, read N- to C-terminus: Exodeoxyribonuclease 7 small subunit (76 aa).

It belongs to the XseB family. As to quaternary structure, heterooligomer composed of large and small subunits.

The protein localises to the cytoplasm. It carries out the reaction Exonucleolytic cleavage in either 5'- to 3'- or 3'- to 5'-direction to yield nucleoside 5'-phosphates.. Its function is as follows. Bidirectionally degrades single-stranded DNA into large acid-insoluble oligonucleotides, which are then degraded further into small acid-soluble oligonucleotides. The chain is Exodeoxyribonuclease 7 small subunit from Latilactobacillus sakei subsp. sakei (strain 23K) (Lactobacillus sakei subsp. sakei).